The chain runs to 209 residues: Response regulator protein VraR (209 aa).

The Response regulatory domain maps to 4 to 120 (KVLFVDDHEM…DIADAVRKTS (117 aa)). Asp-55 carries the 4-aspartylphosphate modification. One can recognise an HTH luxR-type domain in the interval 141-206 (RAELYEMLTE…QAVIYAFQHN (66 aa)). A DNA-binding region (H-T-H motif) is located at residues 165–184 (NQEIASASHITIKTVKTHVS).

As to quaternary structure, homodimer. In terms of processing, phosphorylated by VraS. Phosphorylation state of VraR controls dimerization of the protein.

It localises to the cytoplasm. In terms of biological role, member of the two-component regulatory system VraS/VraR involved in the control of the cell wall peptidoglycan biosynthesis. Upon cellular stress, the histidine kinase VraS transfers the phosphoryl group onto VraR. Upon phosphorylation, VraR dimerizes at the N-terminal domain. In turn, phosphorylation-induced dimerization expands and enhances the VraR binding to its own promoter leading to increased expression and subsequent modulation of as many as 40 genes, which ultimately constitute the S.aureus response to cell wall damage. In addition, inhibits the host autophagic flux and delays the early stage of autophagosome formation, thereby promoting bacterial survival. Facilitates the ability of S.aureus to resist host polymorphonuclear leukocytes-mediated phagocytosis and killing thus contributing to immune evasion. The protein is Response regulator protein VraR (vraR) of Staphylococcus aureus (strain Mu3 / ATCC 700698).